The primary structure comprises 436 residues: Protein disulfide-isomerase (436 aa).

The 150-residue stretch at 216–365 folds into the Thioredoxin domain; that stretch reads FLAGKIDPSI…VEDATESAKA (150 aa). Catalysis depends on nucleophile residues C266 and C269. Cysteines 266 and 269 form a disulfide. Residues 328–436 form a disordered region; it reads TLVPHCRGSR…ASASSVKDEL (109 aa). Residues 334-343 are compositionally biased toward basic residues; it reads RGSRPVHRRE. 2 stretches are compositionally biased toward low complexity: residues 362–377 and 385–436; these read SAKA…AASA and VKSG…KDEL. Positions 433-436 match the Prevents secretion from ER motif; the sequence is KDEL.

Belongs to the protein disulfide isomerase family.

Its subcellular location is the endoplasmic reticulum lumen. The catalysed reaction is Catalyzes the rearrangement of -S-S- bonds in proteins.. Its function is as follows. Participates in the folding of proteins containing disulfide bonds, may be involved in glycosylation, prolyl hydroxylation and triglyceride transfer. This chain is Protein disulfide-isomerase, found in Alternaria alternata (Alternaria rot fungus).